A 248-amino-acid polypeptide reads, in one-letter code: tRNA (guanine-N(1)-)-methyltransferase (248 aa).

Residues Gly113 and 133–138 (IGDYVL) each bind S-adenosyl-L-methionine.

It belongs to the RNA methyltransferase TrmD family. As to quaternary structure, homodimer.

Its subcellular location is the cytoplasm. The enzyme catalyses guanosine(37) in tRNA + S-adenosyl-L-methionine = N(1)-methylguanosine(37) in tRNA + S-adenosyl-L-homocysteine + H(+). In terms of biological role, specifically methylates guanosine-37 in various tRNAs. The chain is tRNA (guanine-N(1)-)-methyltransferase from Shewanella piezotolerans (strain WP3 / JCM 13877).